Here is a 428-residue protein sequence, read N- to C-terminus: F-box/LRR-repeat protein 3 (428 aa).

Residues 1–21 show a composition bias toward basic and acidic residues; the sequence is MKRGGRDSDRNSSEEGTAEKS. The disordered stretch occupies residues 1-27; it reads MKRGGRDSDRNSSEEGTAEKSKKLRTT. The 48-residue stretch at 34–81 folds into the F-box domain; it reads CDWGNLLQDIILQVFKYLPLLDRAHASQVCRNWNQVFHMPDLWRCFEF. LRR repeat units lie at residues 119-146, 181-207, 208-233, 234-259, 316-341, 343-368, and 369-394; these read SSKESAEAACDILSQLVNCSLKTLGLIS, DTPVDDPSLKVLVANNSDTLKLLKMSS, CPHVSPAGILCVADQCHGLRELALNY, HLLSDELLLALSSEKHVRLEHLRIDV, GRSVSKDVLGRVGMTCPRLVELVVCA, GLRPLDEELIRIAERCKNLSAIGLGE, and CEVSCSAFVEFVKMCGGRLSQLSIME.

As to quaternary structure, part of the SCF (SKP1-CUL1-F-box) E3 ubiquitin-protein ligase complex SCF(FBXL3) composed of CUL1, SKP1, RBX1 and FBXL3. Interacts with CRY1 and CRY2 (phosphorylated). Interacts with HDAC3. Interacts with KDM8. Undergoes autophagy-mediated degradation in the liver in a time-dependent manner. Widely expressed.

Its subcellular location is the nucleus. The protein localises to the cytoplasm. The protein operates within protein modification; protein ubiquitination. Functionally, substrate-recognition component of the SCF(FBXL3) E3 ubiquitin ligase complex involved in circadian rhythm function. Plays a key role in the maintenance of both the speed and the robustness of the circadian clock oscillation. The SCF(FBXL3) complex mainly acts in the nucleus and mediates ubiquitination and subsequent degradation of CRY1 and CRY2. Activity of the SCF(FBXL3) complex is counteracted by the SCF(FBXL21) complex. This chain is F-box/LRR-repeat protein 3 (FBXL3), found in Homo sapiens (Human).